The chain runs to 628 residues: MNAPDKLQDLLSLTREPFPASRKVYAEGSEGVRVPMREIALTNGERVTVYDTSGPYTDPLATIDAKLGLPSVRTGWIEARGDTETYAGRNRVALDDGGKHEETARIEALRAQAAALQRTPRRAKAGGNVTQMHYARRGIVTPEMEYVAIRENGKREWMREYLGDAEREARLAGNAKGARIPEIYTPEFVRDEVARGRAIIPANINHPEVEPMAIGRNFGVKINANIGNSAVTSSIEEEVEKLVWAIRWGADNVMDLSTGRNIHTTRDWIVRNSPVPIGTVPIYQALEKVGGIAEDLTWAIYRDTLIEQAEQGVDYFTIHAGVRLPFIHLTANRRTGIVSRGGSILAKWCITHHKENFLYTHFEEICEIMKAYDVSFSLGDGLRPGSASDANDAAQFAELKTLGELTQVAWKHDVQTMIEGPGHVPMHLIQANMDEQIKHCHEAPFYTLGPLTIDIAPGYDHIASAIGAAMIGWMGTAMLCYVTPKEHLGLPDRDDVKQGIIAYKIAAHAADIAKGHPGARARDDAMSKARFEFRWHDQFNLGLDPDTARDYHDETLPKDSSKEAHFCSMCGPKFCSMKITQDVRDYAAAKGLSEEQALADVEQGMAAKSAEFKAQGGELYIPITPVQA.

Residues Asn-225, Met-254, Tyr-283, His-319, 339 to 341 (SRG), 380 to 383 (DGLR), and Glu-419 contribute to the substrate site. His-423 serves as a coordination point for Zn(2+). Residue Tyr-446 coordinates substrate. His-487 is a binding site for Zn(2+). 3 residues coordinate [4Fe-4S] cluster: Cys-567, Cys-570, and Cys-575.

The protein belongs to the ThiC family. As to quaternary structure, homodimer. [4Fe-4S] cluster is required as a cofactor.

The catalysed reaction is 5-amino-1-(5-phospho-beta-D-ribosyl)imidazole + S-adenosyl-L-methionine = 4-amino-2-methyl-5-(phosphooxymethyl)pyrimidine + CO + 5'-deoxyadenosine + formate + L-methionine + 3 H(+). The protein operates within cofactor biosynthesis; thiamine diphosphate biosynthesis. Catalyzes the synthesis of the hydroxymethylpyrimidine phosphate (HMP-P) moiety of thiamine from aminoimidazole ribotide (AIR) in a radical S-adenosyl-L-methionine (SAM)-dependent reaction. The sequence is that of Phosphomethylpyrimidine synthase from Leptothrix cholodnii (strain ATCC 51168 / LMG 8142 / SP-6) (Leptothrix discophora (strain SP-6)).